A 244-amino-acid chain; its full sequence is Putative nucleosome assembly protein C36B7.08c (244 aa).

Positions 199 to 244 (EAMTEEASDEDESVDLEEDEEEEDEEDEEGDEEKQEPPSKKSKKSN) are disordered. Residues 201–232 (MTEEASDEDESVDLEEDEEEEDEEDEEGDEEK) show a composition bias toward acidic residues. Phosphoserine is present on serine 211.

Belongs to the nucleosome assembly protein (NAP) family.

It localises to the nucleus. The sequence is that of Putative nucleosome assembly protein C36B7.08c from Schizosaccharomyces pombe (strain 972 / ATCC 24843) (Fission yeast).